A 220-amino-acid polypeptide reads, in one-letter code: Uracil-DNA glycosylase (220 aa).

Catalysis depends on Asp-61, which acts as the Proton acceptor.

Belongs to the uracil-DNA glycosylase (UDG) superfamily. UNG family.

It is found in the cytoplasm. It catalyses the reaction Hydrolyzes single-stranded DNA or mismatched double-stranded DNA and polynucleotides, releasing free uracil.. Excises uracil residues from the DNA which can arise as a result of misincorporation of dUMP residues by DNA polymerase or due to deamination of cytosine. The sequence is that of Uracil-DNA glycosylase from Pseudoalteromonas translucida (strain TAC 125).